We begin with the raw amino-acid sequence, 188 residues long: GTPase KRas (188 aa).

Residues 10-18 (GAGGVGKSA), 29-35 (VDEYDPT), 59-60 (AG), and 116-119 (NKCD) contribute to the GTP site. An Effector region motif is present at residues 32-40 (YDPTIEDSY). Residues 168–188 (EKMSKDGKKKKKKTKTKCIIM) are disordered. The residue at position 185 (cysteine 185) is a Cysteine methyl ester. The S-farnesyl cysteine moiety is linked to residue cysteine 185. The propeptide at 186 to 188 (IIM) is removed in mature form.

The protein belongs to the small GTPase superfamily. Ras family.

The protein localises to the cell membrane. It localises to the cytoplasm. The catalysed reaction is GTP + H2O = GDP + phosphate + H(+). Its activity is regulated as follows. Alternates between an inactive form bound to GDP and an active form bound to GTP. Activated by a guanine nucleotide-exchange factor (GEF) and inactivated by a GTPase-activating protein (GAP). Its function is as follows. Ras proteins bind GDP/GTP and possess intrinsic GTPase activity. Plays an important role in the regulation of cell proliferation. May play a role in promoting oncogenic events by inducing transcriptional silencing of tumor suppressor genes (TSGs). The sequence is that of GTPase KRas (KRAS) from Meleagris gallopavo (Wild turkey).